A 392-amino-acid chain; its full sequence is Glyceraldehyde-3-phosphate dehydrogenase A, chloroplastic (392 aa).

Residues 1-56 constitute a chloroplast transit peptide; it reads NSSLQVSNKGFSEFSGLRTSSAIPFGRKTNDDLLSVVAFQTSVIGGGNSKRGVVEA. Residues 67 to 68, Asp91, and Arg136 each bind NADP(+); that span reads RI. Residues 208 to 210, Thr239, Arg254, 267 to 268, and Arg290 contribute to the D-glyceraldehyde 3-phosphate site; these read SCT and TG. The Nucleophile role is filled by Cys209. Residue Asn372 coordinates NADP(+).

This sequence belongs to the glyceraldehyde-3-phosphate dehydrogenase family. Tetramer of either four A chains (GAPDH 2) or two A and two B chains (GAPDH 1).

It is found in the plastid. The protein localises to the chloroplast. The catalysed reaction is D-glyceraldehyde 3-phosphate + phosphate + NADP(+) = (2R)-3-phospho-glyceroyl phosphate + NADPH + H(+). It functions in the pathway carbohydrate biosynthesis; Calvin cycle. The chain is Glyceraldehyde-3-phosphate dehydrogenase A, chloroplastic (GAPA) from Nicotiana tabacum (Common tobacco).